We begin with the raw amino-acid sequence, 298 residues long: Junctional adhesion molecule A (298 aa).

The N-terminal stretch at 1–28 (MGTEARAGRRQLLVFTSVVLSSLALGRG) is a signal peptide. Ig-like V-type domains are found at residues 29 to 126 (AVYT…VQLT) and 134 to 227 (PTVH…EAVR). Over 29-237 (AVYTSEPDVR…MEAAELNVGG (209 aa)) the chain is Extracellular. Cystine bridges form between cysteine 49–cysteine 108 and cysteine 152–cysteine 211. Asparagine 184 is a glycosylation site (N-linked (GlcNAc...) asparagine). The helical transmembrane segment at 238 to 258 (IVAAVLVTLILLGFLILGIWF) threads the bilayer. The Cytoplasmic segment spans residues 259 to 298 (AYRRGYFDRTKKGTSSKKVIYSQPAARSEGEFRQTSSFLV). 2 positions are modified to phosphoserine: serine 280 and serine 286.

This sequence belongs to the immunoglobulin superfamily. As to quaternary structure, interacts with the ninth PDZ domain of MPDZ. Interacts with the first PDZ domain of PARD3. The association between PARD3 and PARD6B probably disrupts this interaction. Interacts with ITGAL (via I-domain). Interacts with CD151. (Microbial infection) Interacts with calicivirus capsid protein. In terms of assembly, (Microbial infection) Interacts with the orthoreovirus sigma-1 capsid protein.

It localises to the cell junction. The protein localises to the tight junction. It is found in the cell membrane. Its function is as follows. Seems to play a role in epithelial tight junction formation. Appears early in primordial forms of cell junctions and recruits PARD3. The association of the PARD6-PARD3 complex may prevent the interaction of PARD3 with JAM1, thereby preventing tight junction assembly. Plays a role in regulating monocyte transmigration involved in integrity of epithelial barrier. Ligand for integrin alpha-L/beta-2 involved in memory T-cell and neutrophil transmigration. Involved in platelet activation. (Microbial infection) Acts as a functional receptor for murine norovirus. In terms of biological role, (Microbial infection) In case of orthoreovirus infection, serves as receptor for the virus. This chain is Junctional adhesion molecule A (F11R), found in Felis catus (Cat).